A 317-amino-acid polypeptide reads, in one-letter code: Phospho-N-acetylmuramoyl-pentapeptide-transferase (317 aa).

Helical transmembrane passes span 6 to 26, 52 to 72, 78 to 98, 114 to 134, 145 to 165, 171 to 191, 194 to 214, 223 to 244, and 297 to 317; these read IVMAIVISFIVASILGPIIIP, PTIGGLIFIFATIITMFIMVG, AMIALYSFVGFGFVGFLDDLL, MILLLIVSGFLTWYAYKYIGT, INFGLFYIPFVMFYFAGVTNA, GLDGLATSVTVLVTTFLGIIS, LGHISLAIFCVALAGALLAFL, VFMGDTGSLALGGAVAMVALIL, and KIVSVFSIITVVFCFIAFASL.

This sequence belongs to the glycosyltransferase 4 family. MraY subfamily. The cofactor is Mg(2+).

The protein localises to the cell membrane. It carries out the reaction UDP-N-acetyl-alpha-D-muramoyl-L-alanyl-gamma-D-glutamyl-meso-2,6-diaminopimeloyl-D-alanyl-D-alanine + di-trans,octa-cis-undecaprenyl phosphate = di-trans,octa-cis-undecaprenyl diphospho-N-acetyl-alpha-D-muramoyl-L-alanyl-D-glutamyl-meso-2,6-diaminopimeloyl-D-alanyl-D-alanine + UMP. The protein operates within cell wall biogenesis; peptidoglycan biosynthesis. Catalyzes the initial step of the lipid cycle reactions in the biosynthesis of the cell wall peptidoglycan: transfers peptidoglycan precursor phospho-MurNAc-pentapeptide from UDP-MurNAc-pentapeptide onto the lipid carrier undecaprenyl phosphate, yielding undecaprenyl-pyrophosphoryl-MurNAc-pentapeptide, known as lipid I. This Clostridium perfringens (strain 13 / Type A) protein is Phospho-N-acetylmuramoyl-pentapeptide-transferase.